The sequence spans 303 residues: UDP-3-O-acyl-N-acetylglucosamine deacetylase (303 aa).

Zn(2+) is bound by residues histidine 79, histidine 238, and aspartate 242. The active-site Proton donor is histidine 265.

This sequence belongs to the LpxC family. It depends on Zn(2+) as a cofactor.

The enzyme catalyses a UDP-3-O-[(3R)-3-hydroxyacyl]-N-acetyl-alpha-D-glucosamine + H2O = a UDP-3-O-[(3R)-3-hydroxyacyl]-alpha-D-glucosamine + acetate. It participates in glycolipid biosynthesis; lipid IV(A) biosynthesis; lipid IV(A) from (3R)-3-hydroxytetradecanoyl-[acyl-carrier-protein] and UDP-N-acetyl-alpha-D-glucosamine: step 2/6. Functionally, catalyzes the hydrolysis of UDP-3-O-myristoyl-N-acetylglucosamine to form UDP-3-O-myristoylglucosamine and acetate, the committed step in lipid A biosynthesis. This Pseudoalteromonas translucida (strain TAC 125) protein is UDP-3-O-acyl-N-acetylglucosamine deacetylase.